A 142-amino-acid polypeptide reads, in one-letter code: Maximins y/H11 (142 aa).

The signal sequence occupies residues 1–18 (MNFKYIVAVSFLITSGYA). Positions 19–43 (ESVKNDEQSLSQRDVLEEESLREIR) are excised as a propeptide. Phenylalanine amide is present on F68. A propeptide spanning residues 72–121 (SAEDHEVMKRLEAVIRDLDSLDHPEEASERETRGFNQEEIANLFTKKEKR) is cleaved from the precursor. I141 is modified (isoleucine amide).

Belongs to the bombinin family. In terms of tissue distribution, expressed by the skin glands.

It is found in the secreted. Its function is as follows. Maximin-y shows antimicrobial activity against bacteria and against the fungus C.albicans. It has little hemolytic activity. Functionally, maximin-H11 shows antimicrobial activity against bacteria and against the fungus C.albicans. Shows strong hemolytic activity. This chain is Maximins y/H11, found in Bombina maxima (Giant fire-bellied toad).